The following is a 1030-amino-acid chain: Arrestin domain-containing protein F (1030 aa).

Disordered regions lie at residues 1–27 and 119–154; these read MEII…GSKR and ENKN…NNPL. Over residues 128 to 137 the composition is skewed to acidic residues; the sequence is NFDDGEEDDT. Low complexity predominate over residues 142 to 152; it reads NINNKNNNNNN. Coiled-coil stretches lie at residues 320 to 374 and 544 to 577; these read HQLE…HNNN and QKLN…IRDQ. Disordered stretches follow at residues 539–572 and 885–931; these read SPQS…NSES and NNEK…NNNN. Basic and acidic residues predominate over residues 547–562; that stretch reads NKKDKEKEKEKEKEND. A compositionally biased stretch (low complexity) spans 910–931; the sequence is SPSSSSFLSNSSNTSSSKNNNN.

The protein belongs to the arrestin family.

This is Arrestin domain-containing protein F (adcF) from Dictyostelium discoideum (Social amoeba).